The sequence spans 162 residues: MRIIFLLIFLACAGLIGYALYLQLMDGLLPCPLCIFQRIAYWLIGITALFTFIHNPQSLGQHIYYGLIILFSLAGAIVAGRQAWLIRFPEAFECGISPEEAFLNGLPLAQWWPNMFEANGDCNDGTWQFLSLTLPDWSLLIFAAFGIIAGLLWHKKYNSINQ.

The Cytoplasmic portion of the chain corresponds to 1-4 (MRII). A helical transmembrane segment spans residues 5–21 (FLLIFLACAGLIGYALY). Over 22 to 39 (LQLMDGLLPCPLCIFQRI) the chain is Periplasmic. A disulfide bridge connects residues cysteine 31 and cysteine 34. A helical transmembrane segment spans residues 40 to 56 (AYWLIGITALFTFIHNP). Over 57 to 62 (QSLGQH) the chain is Cytoplasmic. The chain crosses the membrane as a helical span at residues 63 to 80 (IYYGLIILFSLAGAIVAG). Residues 81 to 136 (RQAWLIRFPEAFECGISPEEAFLNGLPLAQWWPNMFEANGDCNDGTWQFLSLTLPD) lie on the Periplasmic side of the membrane. Cysteine 94 and cysteine 122 are oxidised to a cystine. Residues 137 to 155 (WSLLIFAAFGIIAGLLWHK) form a helical membrane-spanning segment. Topologically, residues 156-162 (KYNSINQ) are cytoplasmic.

The protein belongs to the DsbB family.

The protein localises to the cell inner membrane. Functionally, required for disulfide bond formation in some periplasmic proteins. Acts by oxidizing the DsbA protein. This Nitrosomonas eutropha (strain DSM 101675 / C91 / Nm57) protein is Disulfide bond formation protein B.